The chain runs to 591 residues: Aspartate--tRNA ligase (591 aa).

An L-aspartate-binding site is contributed by Glu-173. The segment at 197–200 (QLFK) is aspartate. Arg-219 lines the L-aspartate pocket. ATP-binding positions include 219-221 (RDE) and Gln-228. His-446 is an L-aspartate binding site. ATP is bound at residue Glu-482. Arg-489 is an L-aspartate binding site. 534–537 (GLDR) lines the ATP pocket.

This sequence belongs to the class-II aminoacyl-tRNA synthetase family. Type 1 subfamily. In terms of assembly, homodimer.

The protein localises to the cytoplasm. The enzyme catalyses tRNA(Asp) + L-aspartate + ATP = L-aspartyl-tRNA(Asp) + AMP + diphosphate. Catalyzes the attachment of L-aspartate to tRNA(Asp) in a two-step reaction: L-aspartate is first activated by ATP to form Asp-AMP and then transferred to the acceptor end of tRNA(Asp). This is Aspartate--tRNA ligase from Limosilactobacillus fermentum (strain NBRC 3956 / LMG 18251) (Lactobacillus fermentum).